Here is a 237-residue protein sequence, read N- to C-terminus: Ribonuclease PH (237 aa).

Residues R86 and 124-126 (GTR) contribute to the phosphate site.

The protein belongs to the RNase PH family. Homohexameric ring arranged as a trimer of dimers.

It catalyses the reaction tRNA(n+1) + phosphate = tRNA(n) + a ribonucleoside 5'-diphosphate. Phosphorolytic 3'-5' exoribonuclease that plays an important role in tRNA 3'-end maturation. Removes nucleotide residues following the 3'-CCA terminus of tRNAs; can also add nucleotides to the ends of RNA molecules by using nucleoside diphosphates as substrates, but this may not be physiologically important. Probably plays a role in initiation of 16S rRNA degradation (leading to ribosome degradation) during starvation. The protein is Ribonuclease PH of Methylorubrum extorquens (strain CM4 / NCIMB 13688) (Methylobacterium extorquens).